We begin with the raw amino-acid sequence, 457 residues long: Paired box protein Pax-8 (457 aa).

The paired DNA-binding region spans glycine 9–lysine 135. Residues glycine 12–threonine 68 form a PAI subdomain region. Residues lysine 87–lysine 135 are RED subdomain. Over residues leucine 159–isoleucine 182 the composition is skewed to polar residues. A disordered region spans residues leucine 159–threonine 226. Serine 304 carries the phosphoserine modification.

Interacts with WWTR1.

It is found in the nucleus. Functionally, thought to encode a transcription factor. It may have a role in kidney cell differentiation. May play a regulatory role in mammalian development. This Rattus norvegicus (Rat) protein is Paired box protein Pax-8 (Pax8).